Here is a 351-residue protein sequence, read N- to C-terminus: Nicotinate-nucleotide--dimethylbenzimidazole phosphoribosyltransferase (351 aa).

Residue Glu-317 is the Proton acceptor of the active site.

Belongs to the CobT family.

The enzyme catalyses 5,6-dimethylbenzimidazole + nicotinate beta-D-ribonucleotide = alpha-ribazole 5'-phosphate + nicotinate + H(+). Its pathway is nucleoside biosynthesis; alpha-ribazole biosynthesis; alpha-ribazole from 5,6-dimethylbenzimidazole: step 1/2. Catalyzes the synthesis of alpha-ribazole-5'-phosphate from nicotinate mononucleotide (NAMN) and 5,6-dimethylbenzimidazole (DMB). The chain is Nicotinate-nucleotide--dimethylbenzimidazole phosphoribosyltransferase from Pseudomonas putida (strain ATCC 47054 / DSM 6125 / CFBP 8728 / NCIMB 11950 / KT2440).